The sequence spans 310 residues: MNMHVDMGRALTVRDWPALEALAKTMPADAGAREMTDDDLRAAGVDRRVPEQKLGAAIDEFASLRLPDRIDGRFVDGRRANLTVFDDARVAVRGHARAQRNLLERLETELLGGTLDTAGDEGGIQPDPILQGLVDVIGQGKSDIDAYATIVEGLTKYFQSVADVMSKLQDYISAKDDKNMKIDGGKIKALIQQVIDHLPTMQLPKGADIARWRKELGDAVSISDSGVVTINPDKLIKMRDSLPPDGTVWDTARYQAWNTAFSGQKDNIQNDVQTLVEKYSHQNSNFDNLVKVLSGAISTLTDTAKSYLQI.

2 coiled-coil regions span residues Asp127–Tyr171 and Asp250–Thr299.

The protein belongs to the invasin protein D family.

It localises to the secreted. Functionally, required for invasion of epithelial cells, as well as for survival within host cells, escape from endocytic vesicles and subsequent actin-tail formation. Probably regulates the secretion of effectors BipB and BipC and their final integration into the target cell membrane. This chain is Translocator protein BipD (bipD), found in Burkholderia pseudomallei (strain 1106a).